A 700-amino-acid polypeptide reads, in one-letter code: Elongation factor G (700 aa).

The tr-type G domain maps to 8–290; sequence ERYRNIGISA…AVVEYLPAPT (283 aa). GTP-binding positions include 17–24, 88–92, and 142–145; these read AHIDAGKT, DTPGH, and NKMD.

The protein belongs to the TRAFAC class translation factor GTPase superfamily. Classic translation factor GTPase family. EF-G/EF-2 subfamily.

It is found in the cytoplasm. Its function is as follows. Catalyzes the GTP-dependent ribosomal translocation step during translation elongation. During this step, the ribosome changes from the pre-translocational (PRE) to the post-translocational (POST) state as the newly formed A-site-bound peptidyl-tRNA and P-site-bound deacylated tRNA move to the P and E sites, respectively. Catalyzes the coordinated movement of the two tRNA molecules, the mRNA and conformational changes in the ribosome. The sequence is that of Elongation factor G from Haemophilus influenzae (strain PittEE).